Here is a 456-residue protein sequence, read N- to C-terminus: Bifunctional protein GlmU (456 aa).

Residues 1-229 (MLNSAMSVVI…ISETDGVNNR (229 aa)) are pyrophosphorylase. Residues 11 to 14 (LAAG), Lys25, Gln76, 81 to 82 (GT), 103 to 105 (YGD), Gly140, Glu154, Asn169, and Asn227 contribute to the UDP-N-acetyl-alpha-D-glucosamine site. Asp105 contributes to the Mg(2+) binding site. Asn227 contacts Mg(2+). Positions 230 to 250 (LQLSRLERIYQAEQAEKLLLS) are linker. An N-acetyltransferase region spans residues 251–456 (GVMLRDPARF…QGWQRPVKKK (206 aa)). Residues Arg333 and Lys351 each coordinate UDP-N-acetyl-alpha-D-glucosamine. His363 serves as the catalytic Proton acceptor. Residues Tyr366 and Asn377 each coordinate UDP-N-acetyl-alpha-D-glucosamine. Residues Ala380, 386 to 387 (NY), Ser405, Ala423, and Arg440 contribute to the acetyl-CoA site.

The protein in the N-terminal section; belongs to the N-acetylglucosamine-1-phosphate uridyltransferase family. It in the C-terminal section; belongs to the transferase hexapeptide repeat family. As to quaternary structure, homotrimer. Mg(2+) serves as cofactor.

The protein resides in the cytoplasm. It carries out the reaction alpha-D-glucosamine 1-phosphate + acetyl-CoA = N-acetyl-alpha-D-glucosamine 1-phosphate + CoA + H(+). The catalysed reaction is N-acetyl-alpha-D-glucosamine 1-phosphate + UTP + H(+) = UDP-N-acetyl-alpha-D-glucosamine + diphosphate. It participates in nucleotide-sugar biosynthesis; UDP-N-acetyl-alpha-D-glucosamine biosynthesis; N-acetyl-alpha-D-glucosamine 1-phosphate from alpha-D-glucosamine 6-phosphate (route II): step 2/2. It functions in the pathway nucleotide-sugar biosynthesis; UDP-N-acetyl-alpha-D-glucosamine biosynthesis; UDP-N-acetyl-alpha-D-glucosamine from N-acetyl-alpha-D-glucosamine 1-phosphate: step 1/1. Its pathway is bacterial outer membrane biogenesis; LPS lipid A biosynthesis. Functionally, catalyzes the last two sequential reactions in the de novo biosynthetic pathway for UDP-N-acetylglucosamine (UDP-GlcNAc). The C-terminal domain catalyzes the transfer of acetyl group from acetyl coenzyme A to glucosamine-1-phosphate (GlcN-1-P) to produce N-acetylglucosamine-1-phosphate (GlcNAc-1-P), which is converted into UDP-GlcNAc by the transfer of uridine 5-monophosphate (from uridine 5-triphosphate), a reaction catalyzed by the N-terminal domain. The chain is Bifunctional protein GlmU from Salmonella dublin (strain CT_02021853).